The chain runs to 855 residues: Endochitinase 2 (855 aa).

An N-terminal signal peptide occupies residues 1–22 (MGPTNILAAFIAVSSLFIQSLA). Residues 29-340 (SNLAVYWGQG…DIMKEVLLRC (312 aa)) enclose the GH18 domain. The N-linked (GlcNAc...) asparagine glycan is linked to asparagine 90. Glutamate 175 acts as the Proton donor in catalysis. The segment at 341-672 (DPDPPTSTVT…APSSSTTEDR (332 aa)) is disordered. Low complexity predominate over residues 346–400 (TSTVTSTTSASTSTQTSSQSTTMETKTLSASTTPSSPSTVSPSSTMQTTSTGSTS). Residues 401-456 (IETVTTRSQEPPSTTISTRSASTEPVTTRSQEPPSTTISTRSASTETVTTRSQEPP) are compositionally biased toward polar residues. Residues 457 to 483 (STTISTWSASTETSTSSQDSPSTTIST) are compositionally biased toward low complexity. The span at 484–521 (KSAPTGTVTTRSQDLPSTTISTRSPETETETATTKSQG) shows a compositional bias: polar residues. Residues 522 to 533 (SPSITLSTRSSS) are compositionally biased toward low complexity. Over residues 534–555 (AETVSTRSQHSSSTTISTKSAP) the composition is skewed to polar residues. Over residues 556–567 (TETGTTSEHSTS) the composition is skewed to low complexity. Over residues 568–641 (MPVSTRSAST…SQTPTTIITG (74 aa)) the composition is skewed to polar residues. Composition is skewed to low complexity over residues 642 to 652 (TPSDPVSAPTT) and 659 to 672 (TLTL…TEDR). The GPI-anchor amidated glycine moiety is linked to residue glycine 826. A propeptide spans 827-855 (SAMTVRSMDVVAKALITAGAAVLGLFLGL) (removed in mature form).

The protein belongs to the glycosyl hydrolase 18 family. Chitinase class III subfamily.

It is found in the cell membrane. The enzyme catalyses Random endo-hydrolysis of N-acetyl-beta-D-glucosaminide (1-&gt;4)-beta-linkages in chitin and chitodextrins.. In terms of biological role, may be associated with endosporulation. This Coccidioides posadasii (strain C735) (Valley fever fungus) protein is Endochitinase 2 (CTS2).